Here is a 622-residue protein sequence, read N- to C-terminus: Elongation factor 4 (622 aa).

The tr-type G domain occupies 17-201; it reads ALIRNFCIIA…KVVAEVPAPV (185 aa). GTP is bound by residues 29–34 and 148–151; these read DHGKST and NKID.

Belongs to the TRAFAC class translation factor GTPase superfamily. Classic translation factor GTPase family. LepA subfamily.

The protein resides in the cell membrane. The catalysed reaction is GTP + H2O = GDP + phosphate + H(+). Required for accurate and efficient protein synthesis under certain stress conditions. May act as a fidelity factor of the translation reaction, by catalyzing a one-codon backward translocation of tRNAs on improperly translocated ribosomes. Back-translocation proceeds from a post-translocation (POST) complex to a pre-translocation (PRE) complex, thus giving elongation factor G a second chance to translocate the tRNAs correctly. Binds to ribosomes in a GTP-dependent manner. This Streptomyces avermitilis (strain ATCC 31267 / DSM 46492 / JCM 5070 / NBRC 14893 / NCIMB 12804 / NRRL 8165 / MA-4680) protein is Elongation factor 4.